A 214-amino-acid chain; its full sequence is Pyridoxine/pyridoxamine 5'-phosphate oxidase (214 aa).

Substrate is bound by residues 8–11 (RLSY) and arginine 66. Residues 61 to 66 (RTVLLR), 76 to 77 (FT), lysine 83, and glutamine 105 each bind FMN. Substrate-binding residues include tyrosine 123, arginine 127, and serine 131. Residues 126–146 (SRPRESQLAAHASDPQSAPVS) are disordered. FMN contacts are provided by residues 141–142 (QS) and tryptophan 187. Position 193–195 (193–195 (RMH)) interacts with substrate. Arginine 197 contributes to the FMN binding site.

It belongs to the pyridoxamine 5'-phosphate oxidase family. In terms of assembly, homodimer. The cofactor is FMN.

The catalysed reaction is pyridoxamine 5'-phosphate + O2 + H2O = pyridoxal 5'-phosphate + H2O2 + NH4(+). It catalyses the reaction pyridoxine 5'-phosphate + O2 = pyridoxal 5'-phosphate + H2O2. It functions in the pathway cofactor metabolism; pyridoxal 5'-phosphate salvage; pyridoxal 5'-phosphate from pyridoxamine 5'-phosphate: step 1/1. The protein operates within cofactor metabolism; pyridoxal 5'-phosphate salvage; pyridoxal 5'-phosphate from pyridoxine 5'-phosphate: step 1/1. Catalyzes the oxidation of either pyridoxine 5'-phosphate (PNP) or pyridoxamine 5'-phosphate (PMP) into pyridoxal 5'-phosphate (PLP). The polypeptide is Pyridoxine/pyridoxamine 5'-phosphate oxidase (Deinococcus deserti (strain DSM 17065 / CIP 109153 / LMG 22923 / VCD115)).